The chain runs to 72 residues: Translation initiation factor IF-1 (72 aa).

The region spanning 1-72 is the S1-like domain; that stretch reads MAKDDVIQMQ…SRARIVFRTK (72 aa).

This sequence belongs to the IF-1 family. In terms of assembly, component of the 30S ribosomal translation pre-initiation complex which assembles on the 30S ribosome in the order IF-2 and IF-3, IF-1 and N-formylmethionyl-tRNA(fMet); mRNA recruitment can occur at any time during PIC assembly.

It is found in the cytoplasm. Its function is as follows. One of the essential components for the initiation of protein synthesis. Stabilizes the binding of IF-2 and IF-3 on the 30S subunit to which N-formylmethionyl-tRNA(fMet) subsequently binds. Helps modulate mRNA selection, yielding the 30S pre-initiation complex (PIC). Upon addition of the 50S ribosomal subunit IF-1, IF-2 and IF-3 are released leaving the mature 70S translation initiation complex. The chain is Translation initiation factor IF-1 from Herminiimonas arsenicoxydans.